The sequence spans 320 residues: Putative FBD-associated F-box protein At3g60710 (320 aa).

Positions 2–48 (EDLISQLPNELLQEILLNLPTSESVRTSVLPTRWRNLWQSVPGLYLI) constitute an F-box domain. The FBD domain occupies 212 to 268 (MEEIASSPVPKCLQTSIENVKIKMTPKADQEKSRKAETEVANYILENATLLKLTLWL).

The polypeptide is Putative FBD-associated F-box protein At3g60710 (Arabidopsis thaliana (Mouse-ear cress)).